The following is a 168-amino-acid chain: NADH-quinone oxidoreductase subunit B (168 aa).

[4Fe-4S] cluster contacts are provided by cysteine 37, cysteine 38, cysteine 103, and cysteine 132.

This sequence belongs to the complex I 20 kDa subunit family. In terms of assembly, NDH-1 is composed of 14 different subunits. Subunits NuoB, C, D, E, F, and G constitute the peripheral sector of the complex. Requires [4Fe-4S] cluster as cofactor.

Its subcellular location is the cell inner membrane. The enzyme catalyses a quinone + NADH + 5 H(+)(in) = a quinol + NAD(+) + 4 H(+)(out). In terms of biological role, NDH-1 shuttles electrons from NADH, via FMN and iron-sulfur (Fe-S) centers, to quinones in the respiratory chain. The immediate electron acceptor for the enzyme in this species is believed to be ubiquinone. Couples the redox reaction to proton translocation (for every two electrons transferred, four hydrogen ions are translocated across the cytoplasmic membrane), and thus conserves the redox energy in a proton gradient. In Campylobacter fetus subsp. fetus (strain 82-40), this protein is NADH-quinone oxidoreductase subunit B.